The following is a 162-amino-acid chain: Phosphopantetheine adenylyltransferase (162 aa).

Position 11 (Ser-11) interacts with substrate. Residues 11 to 12 (SF) and His-19 each bind ATP. The substrate site is built by Lys-43, Val-76, and Arg-90. ATP is bound by residues 91–93 (GLR), Glu-101, and 126–132 (LKFVSSS).

Belongs to the bacterial CoaD family. In terms of assembly, homohexamer. Requires Mg(2+) as cofactor.

It is found in the cytoplasm. The catalysed reaction is (R)-4'-phosphopantetheine + ATP + H(+) = 3'-dephospho-CoA + diphosphate. Its pathway is cofactor biosynthesis; coenzyme A biosynthesis; CoA from (R)-pantothenate: step 4/5. In terms of biological role, reversibly transfers an adenylyl group from ATP to 4'-phosphopantetheine, yielding dephospho-CoA (dPCoA) and pyrophosphate. The sequence is that of Phosphopantetheine adenylyltransferase from Streptococcus suis (strain 05ZYH33).